The chain runs to 423 residues: Serine--tRNA ligase (423 aa).

Residue 231–233 (TGE) participates in L-serine binding. Residue 262-264 (RSE) coordinates ATP. Glu285 is an L-serine binding site. 349–352 (EISS) is an ATP binding site. Residue Ser385 coordinates L-serine.

This sequence belongs to the class-II aminoacyl-tRNA synthetase family. Type-1 seryl-tRNA synthetase subfamily. As to quaternary structure, homodimer. The tRNA molecule binds across the dimer.

Its subcellular location is the cytoplasm. The catalysed reaction is tRNA(Ser) + L-serine + ATP = L-seryl-tRNA(Ser) + AMP + diphosphate + H(+). It catalyses the reaction tRNA(Sec) + L-serine + ATP = L-seryl-tRNA(Sec) + AMP + diphosphate + H(+). Its pathway is aminoacyl-tRNA biosynthesis; selenocysteinyl-tRNA(Sec) biosynthesis; L-seryl-tRNA(Sec) from L-serine and tRNA(Sec): step 1/1. Its function is as follows. Catalyzes the attachment of serine to tRNA(Ser). Is also able to aminoacylate tRNA(Sec) with serine, to form the misacylated tRNA L-seryl-tRNA(Sec), which will be further converted into selenocysteinyl-tRNA(Sec). The chain is Serine--tRNA ligase from Coxiella burnetii (strain CbuK_Q154) (Coxiella burnetii (strain Q154)).